The primary structure comprises 310 residues: HPr kinase/phosphorylase (310 aa).

Active-site residues include histidine 138 and lysine 159. Position 153-160 (153-160) interacts with ATP; sequence GSSGVGKS. Serine 160 serves as a coordination point for Mg(2+). Aspartate 177 serves as the catalytic Proton acceptor; for phosphorylation activity. Proton donor; for dephosphorylation activity. The interval 201-210 is important for the catalytic mechanism of both phosphorylation and dephosphorylation; the sequence is LEIRGLGIIN. Glutamate 202 contributes to the Mg(2+) binding site. The active site involves arginine 243. Positions 264–269 are important for the catalytic mechanism of dephosphorylation; it reads PVRPGR.

Belongs to the HPrK/P family. Homohexamer. It depends on Mg(2+) as a cofactor.

The catalysed reaction is [HPr protein]-L-serine + ATP = [HPr protein]-O-phospho-L-serine + ADP + H(+). It catalyses the reaction [HPr protein]-O-phospho-L-serine + phosphate + H(+) = [HPr protein]-L-serine + diphosphate. Its function is as follows. Catalyzes the ATP- as well as the pyrophosphate-dependent phosphorylation of a specific serine residue in HPr, a phosphocarrier protein of the phosphoenolpyruvate-dependent sugar phosphotransferase system (PTS). HprK/P also catalyzes the pyrophosphate-producing, inorganic phosphate-dependent dephosphorylation (phosphorolysis) of seryl-phosphorylated HPr (P-Ser-HPr). The two antagonistic activities of HprK/P are regulated by several intracellular metabolites, which change their concentration in response to the absence or presence of rapidly metabolisable carbon sources (glucose, fructose, etc.) in the growth medium. Also phosphorylates/dephosphorylates the HPr-like catabolite repression protein crh on a specific serine residue. Therefore, by controlling the phosphorylation state of HPr and crh, HPrK/P is a sensor enzyme that plays a major role in the regulation of carbon metabolism and sugar transport: it mediates carbon catabolite repression (CCR), and regulates PTS-catalyzed carbohydrate uptake and inducer exclusion. The polypeptide is HPr kinase/phosphorylase (hprK) (Halalkalibacterium halodurans (strain ATCC BAA-125 / DSM 18197 / FERM 7344 / JCM 9153 / C-125) (Bacillus halodurans)).